Consider the following 533-residue polypeptide: MGNCFTKTYEIPITSGTMRRPASTAERSKARGGDEPGTWRRPSFPRHGAPPHRPPTGSSSAAGALSRRASGGGGEMGPVLQRAMVSVRSLYQLDRKLGSGQFGTTYLCTERATGNRYACKSVSKRKLVRRTDVDDVRREITILQHLSGQPNIAEFRGAYEDNDHVHLVMEFCSGGELFDRITAKGSYSERQAAAVCRDILTVVHVCHFMGVIHRDLKPENFLLASADDDAPLKAIDFGLSVFIEEGKVYKDIVGSAYYVAPEVLQRNYGKEADIWSAGVILYILLCGTPPFWAETEKGIFDAILVNQVDFSTSPWPSISESAKDLIRQMLHRDPQKRITASQALEHRWLKEGGASDRPIDSAVLSRMKQFKAMNKLKQLALKVIAENLSPEEIKGLKQMFNNMDTDRSGTITVEELKVGLTKLGSRISEAEVQKLMEAVDVDKSGSIDYSEFLTAMINKHKLEKEEDLLRAFQHFDKDNSGYITRDELEQAMAEYGMGDEANIKQVLDEVDKDKDGRIDYEEFVEMMRKGIQT.

A disordered region spans residues 1 to 77 (MGNCFTKTYE…RASGGGGEMG (77 aa)). The N-myristoyl glycine moiety is linked to residue Gly2. A compositionally biased stretch (basic and acidic residues) spans 26 to 38 (ERSKARGGDEPGT). Over residues 57 to 69 (GSSSAAGALSRRA) the composition is skewed to low complexity. In terms of domain architecture, Protein kinase spans 91–349 (YQLDRKLGSG…ASQALEHRWL (259 aa)). Residues 97-105 (LGSGQFGTT) and Lys120 each bind ATP. The Proton acceptor role is filled by Asp215. Residues 354–384 (ASDRPIDSAVLSRMKQFKAMNKLKQLALKVI) are autoinhibitory domain. EF-hand domains are found at residues 391-426 (EEIKGLKQMFNNMDTDRSGTITVEELKVGLTKLGSR), 427-462 (ISEAEVQKLMEAVDVDKSGSIDYSEFLTAMINKHKL), 463-498 (EKEEDLLRAFQHFDKDNSGYITRDELEQAMAEYGMG), and 499-533 (DEANIKQVLDEVDKDKDGRIDYEEFVEMMRKGIQT). Asp404, Asp406, Ser408, Thr410, Glu415, Asp440, Asp442, Ser444, Ser446, Glu451, Asp476, Asp478, Ser480, Tyr482, Glu487, Asp511, Asp513, Asp515, Arg517, and Glu522 together coordinate Ca(2+).

This sequence belongs to the protein kinase superfamily. Ser/Thr protein kinase family. CDPK subfamily. In terms of tissue distribution, expressed in roots, leaf blades and developing seeds. Expressed in vascular tissues of roots and leaf blades. Expressed in the phloem tissue of the large vascular bundle in leaf blades.

The protein resides in the membrane. The enzyme catalyses L-seryl-[protein] + ATP = O-phospho-L-seryl-[protein] + ADP + H(+). It carries out the reaction L-threonyl-[protein] + ATP = O-phospho-L-threonyl-[protein] + ADP + H(+). With respect to regulation, activated by calcium. Autophosphorylation may play an important role in the regulation of the kinase activity. Functionally, may play a role in signal transduction pathways that involve calcium as a second messenger. Functions in signal transduction pathways that positively regulate responses to low-nitrogen. Functions in multiple signaling pathways, positively regulating salt tolerance and negatively modulating rice blast fungus resistance. May promote tolerance to salt stress by negatively regulating NADPH oxidase and positively regulating reactive oxygen species (ROS) scavengers. This chain is Calcium-dependent protein kinase 12, found in Oryza sativa subsp. japonica (Rice).